The following is a 447-amino-acid chain: Cysteine--tRNA ligase (447 aa).

Residue Cys-28 coordinates Zn(2+). The 'HIGH' region motif lies at 30–40; the sequence is PTVYNYIHIGN. The Zn(2+) site is built by Cys-211, His-236, and Glu-240. A 'KMSKS' region motif is present at residues 268 to 272; it reads KMSKS. ATP is bound at residue Lys-271.

It belongs to the class-I aminoacyl-tRNA synthetase family. In terms of assembly, monomer. Zn(2+) serves as cofactor.

It localises to the cytoplasm. The catalysed reaction is tRNA(Cys) + L-cysteine + ATP = L-cysteinyl-tRNA(Cys) + AMP + diphosphate. The polypeptide is Cysteine--tRNA ligase (Streptococcus agalactiae serotype III (strain NEM316)).